A 161-amino-acid polypeptide reads, in one-letter code: Assembly protein P7 (161 aa).

Homodimer. Part of the packaging complex composed of RDRP, P4 and P7. Interacts with RDRP.

It is found in the virion. Functionally, assembly protein part of the packaging complex that packages the viral RNA segments, replicate them into a double-stranded form and transcribe them. Required for efficient procapsid assembly. Necessary for stable packaging. May stabilize the RNA-dependent RNA polymerase (RdRP) in its position at the three-fold axis on the inner side of empty-unexpanded procapsids. Could play a role in viral RNA recognition. Seems to be involved in the regulation of plus strand synthesis (transcription) as a fidelity factor. This chain is Assembly protein P7 (P7), found in Pseudomonas phage phi6 (Bacteriophage phi-6).